We begin with the raw amino-acid sequence, 299 residues long: Secreted LysM effector ldpB (299 aa).

An N-terminal signal peptide occupies residues 1–19 (MGLTSILIAQVLFLGAANS). 3 consecutive LysM domains span residues 46–91 (WVND…SYCV), 135–182 (AFYK…YVCI), and 211–258 (KYHK…YVCV). N-linked (GlcNAc...) asparagine glycosylation occurs at asparagine 154. Residues 266–283 (ATATPQPTPQPQQSSSPD) show a composition bias toward low complexity. Residues 266–288 (ATATPQPTPQPQQSSSPDQPMPQ) are disordered.

This sequence belongs to the secreted LysM effector family.

The protein localises to the secreted. It localises to the cell wall. The protein resides in the extracellular space. Its subcellular location is the extracellular matrix. In terms of biological role, cell wall chitin of A.fumigatus recruits lung eosinophils during infection and ldpB might have a role in sequestration of chitin and act as triggers of host immunity to dampen host defense. The sequence is that of Secreted LysM effector ldpB from Aspergillus fumigatus (strain ATCC MYA-4609 / CBS 101355 / FGSC A1100 / Af293) (Neosartorya fumigata).